The sequence spans 308 residues: UPF0282 protein SSO3251 (308 aa).

It belongs to the UPF0282 family.

This chain is UPF0282 protein SSO3251, found in Saccharolobus solfataricus (strain ATCC 35092 / DSM 1617 / JCM 11322 / P2) (Sulfolobus solfataricus).